Reading from the N-terminus, the 329-residue chain is Quinate dehydrogenase (329 aa).

The enzyme catalyses L-quinate + NAD(+) = 3-dehydroquinate + NADH + H(+). The protein operates within aromatic compound metabolism; 3,4-dihydroxybenzoate biosynthesis; 3-dehydroquinate from D-quinate (NAD(+) route): step 1/1. The protein is Quinate dehydrogenase (qutB) of Emericella nidulans (strain FGSC A4 / ATCC 38163 / CBS 112.46 / NRRL 194 / M139) (Aspergillus nidulans).